The chain runs to 383 residues: UPF0425 pyridoxal phosphate-dependent protein Msp_0916 (383 aa).

An N6-(pyridoxal phosphate)lysine modification is found at lysine 207.

The protein belongs to the UPF0425 family. Pyridoxal 5'-phosphate is required as a cofactor.

The sequence is that of UPF0425 pyridoxal phosphate-dependent protein Msp_0916 from Methanosphaera stadtmanae (strain ATCC 43021 / DSM 3091 / JCM 11832 / MCB-3).